Consider the following 185-residue polypeptide: Peptidyl-tRNA hydrolase (185 aa).

Tyrosine 14 provides a ligand contact to tRNA. The active-site Proton acceptor is the histidine 19. TRNA contacts are provided by tyrosine 65, asparagine 67, and asparagine 113.

It belongs to the PTH family. Monomer.

It localises to the cytoplasm. It catalyses the reaction an N-acyl-L-alpha-aminoacyl-tRNA + H2O = an N-acyl-L-amino acid + a tRNA + H(+). In terms of biological role, hydrolyzes ribosome-free peptidyl-tRNAs (with 1 or more amino acids incorporated), which drop off the ribosome during protein synthesis, or as a result of ribosome stalling. Functionally, catalyzes the release of premature peptidyl moieties from peptidyl-tRNA molecules trapped in stalled 50S ribosomal subunits, and thus maintains levels of free tRNAs and 50S ribosomes. This chain is Peptidyl-tRNA hydrolase, found in Rickettsia prowazekii (strain Madrid E).